Here is a 280-residue protein sequence, read N- to C-terminus: NAD kinase (280 aa).

Residue Asp60 is the Proton acceptor of the active site. NAD(+)-binding positions include 60-61 (DG), 134-135 (ND), Arg145, Asp164, 175-180 (TAYSLS), and Gln234.

The protein belongs to the NAD kinase family. Requires a divalent metal cation as cofactor.

The protein resides in the cytoplasm. It carries out the reaction NAD(+) + ATP = ADP + NADP(+) + H(+). Functionally, involved in the regulation of the intracellular balance of NAD and NADP, and is a key enzyme in the biosynthesis of NADP. Catalyzes specifically the phosphorylation on 2'-hydroxyl of the adenosine moiety of NAD to yield NADP. The protein is NAD kinase of Carboxydothermus hydrogenoformans (strain ATCC BAA-161 / DSM 6008 / Z-2901).